Reading from the N-terminus, the 456-residue chain is Putative F-box/LRR-repeat protein At5g02700 (456 aa).

The F-box domain occupies 26 to 72; the sequence is ADFINYMPDDILHHILSFIPTDLAMRTSVLSRRWRHVWCETPCLDIT. LRR repeat units follow at residues 126–154, 177–202, 206–224, 271–300, and 330–355; these read VRDF…DVTL, FCQI…TLDT, LERL…DINQ, LSPL…TVGE, and FVRS…RPST.

This Arabidopsis thaliana (Mouse-ear cress) protein is Putative F-box/LRR-repeat protein At5g02700.